Consider the following 122-residue polypeptide: Large ribosomal subunit protein uL14c (122 aa).

It belongs to the universal ribosomal protein uL14 family. In terms of assembly, part of the 50S ribosomal subunit.

It localises to the plastid. It is found in the chloroplast. Functionally, binds to 23S rRNA. This Chaetosphaeridium globosum (Charophycean green alga) protein is Large ribosomal subunit protein uL14c.